The chain runs to 886 residues: Alanine--tRNA ligase (886 aa).

Zn(2+)-binding residues include H570, H574, C672, and H676.

It belongs to the class-II aminoacyl-tRNA synthetase family. Zn(2+) is required as a cofactor.

The protein localises to the cytoplasm. The enzyme catalyses tRNA(Ala) + L-alanine + ATP = L-alanyl-tRNA(Ala) + AMP + diphosphate. Catalyzes the attachment of alanine to tRNA(Ala) in a two-step reaction: alanine is first activated by ATP to form Ala-AMP and then transferred to the acceptor end of tRNA(Ala). Also edits incorrectly charged Ser-tRNA(Ala) and Gly-tRNA(Ala) via its editing domain. This Acidothermus cellulolyticus (strain ATCC 43068 / DSM 8971 / 11B) protein is Alanine--tRNA ligase.